A 328-amino-acid polypeptide reads, in one-letter code: Protein chibby homolog 2 (328 aa).

A disordered region spans residues 180–231 (NKGASSVQKDTENTTAAGEGSLGPTCQEEHDAKEESTTPTQNDTKIAPSTED). Polar residues predominate over residues 182–195 (GASSVQKDTENTTA). A compositionally biased stretch (basic and acidic residues) spans 206–215 (QEEHDAKEES). Residues 259 to 307 (RESLHALQDESKFFQEEYKKLKLQLNNVKNTVSDITTQMEMLEKELIAI) are a coiled coil.

It belongs to the chibby family. SPERT subfamily.

The polypeptide is Protein chibby homolog 2 (CBY2) (Gallus gallus (Chicken)).